Consider the following 358-residue polypeptide: Uroporphyrinogen decarboxylase (358 aa).

Substrate is bound by residues 27–31 (RQAGR), Asp77, Tyr154, Ser209, and His327.

This sequence belongs to the uroporphyrinogen decarboxylase family. As to quaternary structure, homodimer.

Its subcellular location is the cytoplasm. It carries out the reaction uroporphyrinogen III + 4 H(+) = coproporphyrinogen III + 4 CO2. It participates in porphyrin-containing compound metabolism; protoporphyrin-IX biosynthesis; coproporphyrinogen-III from 5-aminolevulinate: step 4/4. Functionally, catalyzes the decarboxylation of four acetate groups of uroporphyrinogen-III to yield coproporphyrinogen-III. The sequence is that of Uroporphyrinogen decarboxylase from Azoarcus sp. (strain BH72).